A 122-amino-acid polypeptide reads, in one-letter code: Large ribosomal subunit protein uL14 (122 aa).

The protein belongs to the universal ribosomal protein uL14 family. In terms of assembly, part of the 50S ribosomal subunit. Forms a cluster with proteins L3 and L19. In the 70S ribosome, L14 and L19 interact and together make contacts with the 16S rRNA in bridges B5 and B8.

Its function is as follows. Binds to 23S rRNA. Forms part of two intersubunit bridges in the 70S ribosome. This chain is Large ribosomal subunit protein uL14, found in Spiroplasma citri.